A 95-amino-acid chain; its full sequence is Large ribosomal subunit protein eL37z (95 aa).

Zn(2+)-binding residues include Cys19, Cys22, Cys34, and Cys37. The C4-type zinc finger occupies Cys19–Cys37.

This sequence belongs to the eukaryotic ribosomal protein eL37 family. It depends on Zn(2+) as a cofactor.

Its function is as follows. Binds to the 23S rRNA. The protein is Large ribosomal subunit protein eL37z (RPL37A) of Arabidopsis thaliana (Mouse-ear cress).